The primary structure comprises 819 residues: Deubiquitinase MYSM1 (819 aa).

Over residues 1 to 12 (MEAEEADVDVEG) the composition is skewed to acidic residues. Residues 1–29 (MEAEEADVDVEGDVAAAAQPGNDESTASV) are disordered. Ser107 bears the Phosphoserine mark. Residues 113-164 (SHSVKWTVEEKELFEQGLAKFGRRWTKIATLLKSRTVLQVKSYARQYFKNKV) enclose the SANT domain. Lys184 is covalently cross-linked (Glycyl lysine isopeptide (Lys-Gly) (interchain with G-Cter in SUMO2)). Position 215 is a phosphoserine (Ser215). Disordered stretches follow at residues 228-247 (ELTS…DVPN), 260-279 (QEGP…KQGE), and 318-347 (LHRG…NEML). Residues 230-240 (TSQTSQNSGSH) show a composition bias toward polar residues. Thr233 carries the post-translational modification Phosphothreonine. The span at 318–340 (LHRGEVREEAKHSPSPEPCERQD) shows a compositional bias: basic and acidic residues. At Ser332 the chain carries Phosphoserine. Positions 363 to 461 (LKPPEQEVEI…FGCEQAVYNR (99 aa)) constitute an SWIRM domain. Residues 568–700 (VKVAAEALLI…PLPYSQITCL (133 aa)) form the MPN domain. His647, His649, and Asp660 together coordinate Zn(2+). The JAMM motif signature appears at 647 to 660 (HSHPAFDPNPSLRD). The LXXLL motif motif lies at 765-769 (LQKLL).

This sequence belongs to the peptidase M67A family. MYSM1 subfamily. As to quaternary structure, component of a large chromatin remodeling complex, at least composed of MYSM1, PCAF, RBM10 and KIF11/TRIP5. Binds histones.

The protein localises to the nucleus. The protein resides in the cytoplasm. Metalloprotease with deubiquitinase activity that plays important regulator roles in hematopoietic stem cell function, blood cell production and immune response. Participates in the normal programming of B-cell responses to antigen after the maturation process. Within the cytoplasm, plays critical roles in the repression of innate immunity and autoimmunity. Removes 'Lys-63'-linked polyubiquitins from TRAF3 and TRAF6 complexes. Attenuates NOD2-mediated inflammation and tissue injury by promoting 'Lys-63'-linked deubiquitination of RIPK2 component. Suppresses the CGAS-STING1 signaling pathway by cleaving STING1 'Lys-63'-linked ubiquitin chains. In the nucleus, acts as a hematopoietic transcription regulator derepressing a range of genes essential for normal stem cell differentiation including EBF1 and PAX5 in B-cells, ID2 in NK-cell progenitor or FLT3 in dendritic cell precursors. Deubiquitinates monoubiquitinated histone H2A, a specific tag for epigenetic transcriptional repression, leading to dissociation of histone H1 from the nucleosome. This is Deubiquitinase MYSM1 (Mysm1) from Mus musculus (Mouse).